The primary structure comprises 422 residues: Tyrosine--tRNA ligase (422 aa).

Tyrosine 34 lines the L-tyrosine pocket. The short motif at 39-48 (PTEDSLHVGH) is the 'HIGH' region element. Residues tyrosine 172 and glutamine 176 each contribute to the L-tyrosine site. A 'KMSKS' region motif is present at residues 232-236 (KFGKT). Lysine 235 lines the ATP pocket. Residues 354-412 (KDLQEALVLSSLAQSRTQAKNMIISNSISINTKKIVNKNYIIDDNDKLFNQFTLLSRGK) form the S4 RNA-binding domain.

The protein belongs to the class-I aminoacyl-tRNA synthetase family. TyrS type 1 subfamily. As to quaternary structure, homodimer.

The protein localises to the cytoplasm. It catalyses the reaction tRNA(Tyr) + L-tyrosine + ATP = L-tyrosyl-tRNA(Tyr) + AMP + diphosphate + H(+). Functionally, catalyzes the attachment of tyrosine to tRNA(Tyr) in a two-step reaction: tyrosine is first activated by ATP to form Tyr-AMP and then transferred to the acceptor end of tRNA(Tyr). The protein is Tyrosine--tRNA ligase of Buchnera aphidicola subsp. Schizaphis graminum (strain Sg).